Here is a 690-residue protein sequence, read N- to C-terminus: MAKKKSEDHSGADANDSDYNEEPNFDDPPNFVDNISDEDLLGDMLAQRPSEADGVESVVVVDNMPKVEPSRLDKLKSVINKLFSHCGEIVNVVYPVDEEGNTKGYAFMEYKTASQAEDAVKKLNNHRLDKNYTFAVNLFTDFQKYENIPEKWEPPTVQPFKVQSDLYNFINDPDTYDQYCVAAETAPNCVQVGFWQNTLPEPNELETRERFTDTFVKWSPLGTYVVTFHKPGVAIWGGSSFQKIQKFPHPGTQFVEFSPCENYLVTYGPTPTGQKIIIWDIRTGGEKRSFVGDGMSVLSMFRWSHDDKYVARMGESSIHIYETPSFYLLDLKSIKIPGIRGFSWSPTDNVIAYWVEEQNQIPARVTLMKIPKKREIRNKNLFHVADCKLHWQKSGDYLCVKVDRYSKLKKDKKELDVKFLGMFYNFEIFHMREKEIPVDSIEIRELILAFAWEPIGNKFSIIHGEQNSANVSFYEVNKGVKPSLVKRLEKKSCTHLFWSPRGQFIVMANLTMGTFEFVDTTNDYIISASPDHFRASEVEWDPTGRYVVTGVSSWKVKEDTGFNMYTLQGRIIKRTILKNFVQFLWRPRPPTLLSEEKQKEIKKNLKKYYPTFEQKDRLRLTRASKELLEKRAQLRETFMEYRNKRIAEWKDQKSRRQMLRGHVDTDNLETDEVDEEVVEFLVKEEITLLE.

Residues 1-11 show a composition bias toward basic and acidic residues; it reads MAKKKSEDHSG. Residues 1–33 are disordered; sequence MAKKKSEDHSGADANDSDYNEEPNFDDPPNFVD. Over residues 15–25 the composition is skewed to acidic residues; the sequence is NDSDYNEEPNF. An RRM domain is found at 57–141; the sequence is SVVVVDNMPK…YTFAVNLFTD (85 aa). 5 WD repeats span residues 207-246, 292-331, 334-369, 442-484, and 530-575; these read TRER…KIQK, GDGM…LLDL, IKIP…TLMK, EIRE…KPSL, and PDHF…IKRT. Residues 613 to 646 adopt a coiled-coil conformation; the sequence is EQKDRLRLTRASKELLEKRAQLRETFMEYRNKRI.

Belongs to the eIF-3 subunit B family. In terms of assembly, component of the eukaryotic translation initiation factor 3 (eIF-3) complex. The eIF-3 complex interacts with pix. Interacts with mxt.

Its subcellular location is the cytoplasm. Its function is as follows. RNA-binding component of the eukaryotic translation initiation factor 3 (eIF-3) complex, which is involved in protein synthesis of a specialized repertoire of mRNAs and, together with other initiation factors, stimulates binding of mRNA and methionyl-tRNAi to the 40S ribosome. The eIF-3 complex specifically targets and initiates translation of a subset of mRNAs involved in cell proliferation. The protein is Eukaryotic translation initiation factor 3 subunit B of Drosophila grimshawi (Hawaiian fruit fly).